The following is a 348-amino-acid chain: Probable tRNA pseudouridine synthase B (348 aa).

The Nucleophile role is filled by Asp-93. The PUA domain occupies 260–335; sequence LKKIYILDSA…IAVDIERVFM (76 aa).

It belongs to the pseudouridine synthase TruB family. Type 2 subfamily.

It carries out the reaction uridine(55) in tRNA = pseudouridine(55) in tRNA. Could be responsible for synthesis of pseudouridine from uracil-55 in the psi GC loop of transfer RNAs. The polypeptide is Probable tRNA pseudouridine synthase B (Nanoarchaeum equitans (strain Kin4-M)).